A 429-amino-acid chain; its full sequence is Glutamate-1-semialdehyde 2,1-aminomutase 2 (429 aa).

K268 bears the N6-(pyridoxal phosphate)lysine mark.

The protein belongs to the class-III pyridoxal-phosphate-dependent aminotransferase family. HemL subfamily. Homodimer. Requires pyridoxal 5'-phosphate as cofactor.

The protein localises to the cytoplasm. It catalyses the reaction (S)-4-amino-5-oxopentanoate = 5-aminolevulinate. It functions in the pathway porphyrin-containing compound metabolism; protoporphyrin-IX biosynthesis; 5-aminolevulinate from L-glutamyl-tRNA(Glu): step 2/2. In Bacillus cereus (strain AH187), this protein is Glutamate-1-semialdehyde 2,1-aminomutase 2.